Consider the following 489-residue polypeptide: Ubiquitin-like-specific protease ESD4 (489 aa).

Residues 43 to 66 are disordered; it reads AMSEDSGKPASSNPTISRISRYPD. Residues 51 to 60 are compositionally biased toward polar residues; the sequence is PASSNPTISR. Positions 200-223 form a coiled coil; that stretch reads ASSLEAYRKLMQSAEKRNSKLEAL. Active-site residues include His380, Asp397, and Cys448.

Belongs to the peptidase C48 family. In terms of assembly, interacts with NUA (via N-terminus). Interacts with KIN10. Expressed in seedlings, leaves, shoots, flowers and roots.

It is found in the nucleus membrane. It catalyses the reaction Hydrolysis of the alpha-linked peptide bond in the sequence Gly-Gly-|-Ala-Thr-Tyr at the C-terminal end of the small ubiquitin-like modifier (SUMO) propeptide, Smt3, leading to the mature form of the protein. A second reaction involves the cleavage of an epsilon-linked peptide bond between the C-terminal glycine of the mature SUMO and the lysine epsilon-amino group of the target protein.. Its activity is regulated as follows. Inhibited by thiol reagent and N-ethylmaleimide, but not by ubiquitin aldehyde, pepstatin A or benzamidine HCl. Protease that catalyzes two essential functions in the SUMO pathway: processing of full-length SUMOs to their mature forms and deconjugation of SUMO from targeted proteins. Cleaves precursors of SUM1 and SUM2, but not of SUM3 or SUM5. Able to release SUM1 and SUM2 from conjugates, but unable to cleave SUM3. Acts predominantly as an isopeptidase, cleaving SUMO-conjugated proteins better than SUMO peptides. Plays an important role in the control of flowering time. The chain is Ubiquitin-like-specific protease ESD4 (ESD4) from Arabidopsis thaliana (Mouse-ear cress).